The primary structure comprises 408 residues: UDP-N-acetylglucosamine--dolichyl-phosphate N-acetylglucosaminephosphotransferase (408 aa).

The next 2 helical transmembrane spans lie at 6-26 (SLLGFIGICCLPPILLLIYLP) and 32-52 (WIIVQSGFFSFGAGLLTYKLI). The UDP-N-acetyl-alpha-D-glucosamine site is built by D68 and E84. 2 helical membrane passes run 87 to 107 (GICVAVVYLVCVILFQTFQWF) and 120 to 140 (AALTSICFMILLGFGDDVLNL). K145 is a binding site for dolichyl phosphate. A run of 2 helical transmembrane segments spans residues 147-167 (ILPMFASLPLLVAYAGGTTVV) and 181-201 (LGVVFDLGIFYRIYLLMLAIF). Residue 200-208 (IFCTNSINI) coordinates dolichyl phosphate. N207 contacts Mg(2+). N213 lines the UDP-N-acetyl-alpha-D-glucosamine pocket. Helical transmembrane passes span 221 to 241 (VVIATSIIIHNLIELTIASSV) and 258 to 278 (HLFSLILMIPFLFTTISLLFY). D289 contributes to the Mg(2+) binding site. The helical transmembrane segment at 297–317 (MCFAVVAILCHFSKTLLLFFI) threads the bilayer. 338–340 (RHR) provides a ligand contact to UDP-N-acetyl-alpha-D-glucosamine. 2 helical membrane passes run 351–371 (MEAIPTNLTIINLLLMITGPL) and 376–396 (LCVYLLIFQGLCSCVGFGIRY).

It belongs to the glycosyltransferase 4 family. As to quaternary structure, homodimer. Requires Mg(2+) as cofactor.

Its subcellular location is the endoplasmic reticulum membrane. The enzyme catalyses a di-trans,poly-cis-dolichyl phosphate + UDP-N-acetyl-alpha-D-glucosamine = an N-acetyl-alpha-D-glucosaminyl-diphospho-di-trans,poly-cis-dolichol + UMP. It functions in the pathway protein modification; protein glycosylation. Inhibited by natural nucleoside antibiotic tunicamycin, which acts as a structural analog and competitor of UDP-GlcNAc. Its function is as follows. UDP-N-acetylglucosamine--dolichyl-phosphate N-acetylglucosaminephosphotransferase that operates in the biosynthetic pathway of dolichol-linked oligosaccharides, the glycan precursors employed in protein asparagine (N)-glycosylation. The assembly of dolichol-linked oligosaccharides begins on the cytosolic side of the endoplasmic reticulum membrane and finishes in its lumen. The sequential addition of sugars to dolichol pyrophosphate produces dolichol-linked oligosaccharides containing fourteen sugars, including two GlcNAcs, nine mannoses and three glucoses. Once assembled, the oligosaccharide is transferred from the lipid to nascent proteins by oligosaccharyltransferases. Catalyzes the initial step of dolichol-linked oligosaccharide biosynthesis, transfering GlcNAc-1-P from cytosolic UDP-GlcNAc onto the carrier lipid dolichyl phosphate (P-dolichol), yielding GlcNAc-P-P-dolichol embedded in the cytoplasmic leaflet of the endoplasmic reticulum membrane. The protein is UDP-N-acetylglucosamine--dolichyl-phosphate N-acetylglucosaminephosphotransferase (alg7) of Dictyostelium discoideum (Social amoeba).